A 706-amino-acid chain; its full sequence is Elongation factor G (706 aa).

A tr-type G domain is found at 8–290 (NRYRNIGICA…AVIDYLPAPT (283 aa)). Residues 17-24 (AHVDAGKT), 88-92 (DTPGH), and 142-145 (NKMD) each bind GTP.

It belongs to the TRAFAC class translation factor GTPase superfamily. Classic translation factor GTPase family. EF-G/EF-2 subfamily.

Its subcellular location is the cytoplasm. Catalyzes the GTP-dependent ribosomal translocation step during translation elongation. During this step, the ribosome changes from the pre-translocational (PRE) to the post-translocational (POST) state as the newly formed A-site-bound peptidyl-tRNA and P-site-bound deacylated tRNA move to the P and E sites, respectively. Catalyzes the coordinated movement of the two tRNA molecules, the mRNA and conformational changes in the ribosome. The chain is Elongation factor G from Stutzerimonas stutzeri (strain A1501) (Pseudomonas stutzeri).